The following is a 295-amino-acid chain: ATP synthase gamma chain (295 aa).

The protein belongs to the ATPase gamma chain family. F-type ATPases have 2 components, CF(1) - the catalytic core - and CF(0) - the membrane proton channel. CF(1) has five subunits: alpha(3), beta(3), gamma(1), delta(1), epsilon(1). CF(0) has three main subunits: a, b and c.

The protein localises to the cell membrane. Produces ATP from ADP in the presence of a proton gradient across the membrane. The gamma chain is believed to be important in regulating ATPase activity and the flow of protons through the CF(0) complex. This chain is ATP synthase gamma chain, found in Caldanaerobacter subterraneus subsp. tengcongensis (strain DSM 15242 / JCM 11007 / NBRC 100824 / MB4) (Thermoanaerobacter tengcongensis).